A 126-amino-acid chain; its full sequence is Basic phospholipase A2 1 (126 aa).

A propeptide spanning residues 1–7 is cleaved from the precursor; the sequence is SNRPMPL. Cystine bridges form between cysteine 18–cysteine 78, cysteine 33–cysteine 125, cysteine 35–cysteine 51, cysteine 50–cysteine 106, cysteine 57–cysteine 99, cysteine 67–cysteine 92, and cysteine 85–cysteine 97. Ca(2+) contacts are provided by tyrosine 34, glycine 36, and glycine 38. Histidine 54 is a catalytic residue. Position 55 (aspartate 55) interacts with Ca(2+). Aspartate 100 is a catalytic residue.

This sequence belongs to the phospholipase A2 family. Group I subfamily. D49 sub-subfamily. In terms of assembly, heterodimer formed between two homologous isoforms: isoform 1 and isoform 2. Ca(2+) is required as a cofactor. As to expression, expressed by the venom gland.

The protein localises to the secreted. It carries out the reaction a 1,2-diacyl-sn-glycero-3-phosphocholine + H2O = a 1-acyl-sn-glycero-3-phosphocholine + a fatty acid + H(+). Functionally, PLA2 catalyzes the calcium-dependent hydrolysis of the 2-acyl groups in 3-sn-phosphoglycerides. The sequence is that of Basic phospholipase A2 1 from Naja sagittifera (Andaman cobra).